The chain runs to 135 residues: Large ribosomal subunit protein uL16c (135 aa).

The protein belongs to the universal ribosomal protein uL16 family. As to quaternary structure, part of the 50S ribosomal subunit.

It is found in the plastid. The protein localises to the chloroplast. The protein is Large ribosomal subunit protein uL16c of Stigeoclonium helveticum (Green alga).